A 70-amino-acid polypeptide reads, in one-letter code: Small ribosomal subunit protein bS21A (70 aa).

Belongs to the bacterial ribosomal protein bS21 family.

In Paraburkholderia xenovorans (strain LB400), this protein is Small ribosomal subunit protein bS21A.